The following is a 161-amino-acid chain: D-amino-acid N-acetyltransferase HPA3 (161 aa).

Serine 2 is modified (N-acetylserine). The N-acetyltransferase domain maps to 14-161; that stretch reads IVVKAIEPKD…DKVLYKRNGY (148 aa). 98 to 111 contributes to the acetyl-CoA binding site; the sequence is LYVTERARVKGVGR.

The protein belongs to the acetyltransferase family. GNAT subfamily. Post-translationally, autoacetylates in an intermolecular reaction.

It localises to the cytoplasm. It is found in the nucleus. The catalysed reaction is a D-alpha-amino acid + acetyl-CoA = an N-acetyl-D-amino acid + CoA + H(+). Its function is as follows. N-acetyltransferase that acts on a wide range of D-amino acids. Catalyzes the N-acetylation through an ordered bi-bi mechanism, in which acetyl-CoA is the first substrate to be bound and CoA is the last product to be liberated. D-amino acids are toxic for the cell and their N-acetylation, preceding removal from cells, plays an important role in detoxification of D-amino acids. In vitro, capable of acetylating histone H4 at 'Lys-8' and polyamines like putrescine, spermidine and spermine. The polypeptide is D-amino-acid N-acetyltransferase HPA3 (Saccharomyces cerevisiae (strain ATCC 204508 / S288c) (Baker's yeast)).